The sequence spans 137 residues: Fluoride-specific ion channel FluC 1 (137 aa).

4 helical membrane-spanning segments follow: residues 4 to 24, 37 to 57, 67 to 87, and 100 to 120; these read LIYI…YYLG, LATL…TTYI, VITG…TFSV, and IAFL…GLGY. The Na(+) site is built by glycine 77 and threonine 80.

This sequence belongs to the fluoride channel Fluc/FEX (TC 1.A.43) family.

Its subcellular location is the cell membrane. It catalyses the reaction fluoride(in) = fluoride(out). Na(+) is not transported, but it plays an essential structural role and its presence is essential for fluoride channel function. Functionally, fluoride-specific ion channel. Important for reducing fluoride concentration in the cell, thus reducing its toxicity. The protein is Fluoride-specific ion channel FluC 1 of Bacillus thuringiensis subsp. konkukian (strain 97-27).